The sequence spans 110 residues: uncharacterized protein (110 aa).

This is an uncharacterized protein from Schizosaccharomyces pombe (strain 972 / ATCC 24843) (Fission yeast).